Reading from the N-terminus, the 1969-residue chain is Echinoderm microtubule-associated protein-like 5 (1969 aa).

WD repeat units lie at residues 59–100 (GHSD…TISV), 104–145 (VHTH…MLSM), 148–187 (GHTD…LTPK), 195–233 (GDLQ…RTIQ), 235–273 (AHAA…TVID), 280–321 (GYKG…LIMQ), 323–362 (HCEG…LIAR), 406–445 (DRKE…KKVG), 449–488 (GSLS…EVTS), and 561–601 (GHSA…KLKD). The interval 609–633 (ESLADSHSDESDSDLSDVPELDSEI) is disordered. A compositionally biased stretch (acidic residues) spans 619-633 (SDSDLSDVPELDSEI). 9 WD repeats span residues 725 to 766 (GHDD…PLSI), 770 to 811 (HHQY…KLSI), 814 to 853 (GSKD…LIGR), 861 to 900 (GKND…KTVK), 901 to 940 (AHDG…KTYA), 996 to 1035 (HMEG…CMLA), 1038 to 1077 (KLKK…DLVS), 1080 to 1120 (HRKD…RVGI), and 1236 to 1276 (AHST…YREK). Disordered stretches follow at residues 1274–1297 (REKR…YDSD) and 1326–1355 (QQKE…NVGK). The segment covering 1281–1294 (SEESDIDSEEDGGY) has biased composition (acidic residues). A compositionally biased stretch (basic and acidic residues) spans 1326-1337 (QQKEPSIDERPP). WD repeat units lie at residues 1412-1463 (EHND…TLSI), 1467-1508 (YHSK…KIAS), 1511-1550 (GHNQ…LLSK), 1560-1598 (ARMQ…RIVA), 1600-1646 (AHNG…RAFR), 1691-1731 (GHVD…MLNK), 1733-1774 (NLGH…GKKR), 1775-1814 (DRRC…TLNR), 1887-1926 (AEKA…KFAK), and 1932-1969 (GHSP…HTPH).

Belongs to the WD repeat EMAP family.

The protein localises to the cytoplasm. It is found in the cytoskeleton. May modify the assembly dynamics of microtubules, such that microtubules are slightly longer, but more dynamic. The polypeptide is Echinoderm microtubule-associated protein-like 5 (EML5) (Homo sapiens (Human)).